The sequence spans 418 residues: Replication factor C large subunit (418 aa).

Residue 47–54 (GSQGTGKT) participates in ATP binding.

This sequence belongs to the activator 1 small subunits family. RfcL subfamily. Heteromultimer composed of small subunits (RfcS) and large subunits (RfcL).

In terms of biological role, part of the RFC clamp loader complex which loads the PCNA sliding clamp onto DNA. This chain is Replication factor C large subunit, found in Thermoplasma acidophilum (strain ATCC 25905 / DSM 1728 / JCM 9062 / NBRC 15155 / AMRC-C165).